The following is a 179-amino-acid chain: Natural killer cells antigen CD94 (179 aa).

The Cytoplasmic portion of the chain corresponds to 1-10 (MAVFKTTLWW). Residues 11–31 (LISGTLGIICLSLTATLGILL) form a helical; Signal-anchor for type II membrane protein membrane-spanning segment. Over 32 to 179 (KNSFTKLSIE…NRYICKQQLI (148 aa)) the chain is Extracellular. 2 disulfides stabilise this stretch: Cys-58/Cys-70 and Cys-61/Cys-72. The C-type lectin domain maps to 68 to 175 (YRCNCYFISS…CEDKNRYICK (108 aa)). Asn-83 and Asn-132 each carry an N-linked (GlcNAc...) asparagine glycan. Cystine bridges form between Cys-89-Cys-174 and Cys-152-Cys-166.

In terms of assembly, can form disulfide-bonded heterodimer with NKG2 family members KLRC1 and KLRC2. KLRD1-KLRC1 heterodimer interacts with peptide-bound MHC-E-B2M heterotrimeric complex. KLRD1 plays a prominent role in directly interacting with MHC-E. KLRD1-KLRC1 interacts with much higher affinity with peptide-bound MHC-E-B2M than KLRD1-KLRC2. Interacts with the adapter protein TYROBP/DAP12; this interaction is required for cell surface expression and cell activation. In terms of tissue distribution, natural killer cells.

It localises to the cell membrane. Functionally, immune receptor involved in self-nonself discrimination. In complex with KLRC1 or KLRC2 on cytotoxic and regulatory lymphocyte subsets, recognizes non-classical major histocompatibility (MHC) class Ib molecule MHC-E loaded with self-peptides derived from the signal sequence of classical MHC class Ia and non-classical MHC class Ib molecules. Enables cytotoxic cells to monitor the expression of MHC class I molecules in healthy cells and to tolerate self. Primarily functions as a ligand binding subunit as it lacks the capacity to signal. In terms of biological role, KLRD1-KLRC1 acts as an immune inhibitory receptor. Key inhibitory receptor on natural killer (NK) cells that regulates their activation and effector functions. Dominantly counteracts T cell receptor signaling on a subset of memory/effector CD8-positive T cells as part of an antigen-driven response to avoid autoimmunity. On intraepithelial CD8-positive gamma-delta regulatory T cells triggers TGFB1 secretion, which in turn limits the cytotoxic programming of intraepithelial CD8-positive alpha-beta T cells, distinguishing harmless from pathogenic antigens. In MHC-E-rich tumor microenvironment, acts as an immune inhibitory checkpoint and may contribute to progressive loss of effector functions of NK cells and tumor-specific T cells, a state known as cell exhaustion. Upon MHC-E-peptide binding, transmits intracellular signals through KLRC1 immunoreceptor tyrosine-based inhibition motifs (ITIMs) by recruiting INPP5D/SHIP-1 and INPPL1/SHIP-2 tyrosine phosphatases to ITIMs, and ultimately opposing signals transmitted by activating receptors through dephosphorylation of proximal signaling molecules. Its function is as follows. KLRD1-KLRC2 acts as an immune activating receptor. On cytotoxic lymphocyte subsets recognizes MHC-E loaded with signal sequence-derived peptides from non-classical MHC class Ib MHC-G molecules, likely playing a role in the generation and effector functions of adaptive NK cells and in maternal-fetal tolerance during pregnancy. Regulates the effector functions of terminally differentiated cytotoxic lymphocyte subsets, and in particular may play a role in adaptive NK cell response to viral infection. Upon MHC-E-peptide binding, transmits intracellular signals via the adapter protein TYROBP/DAP12, triggering the phosphorylation of proximal signaling molecules and cell activation. The chain is Natural killer cells antigen CD94 (KLRD1) from Pongo pygmaeus (Bornean orangutan).